The primary structure comprises 450 residues: 3-phosphoshikimate 1-carboxyvinyltransferase (450 aa).

The 3-phosphoshikimate site is built by Lys-28, Ser-29, and Arg-33. Lys-28 provides a ligand contact to phosphoenolpyruvate. Phosphoenolpyruvate contacts are provided by Gly-100 and Arg-128. Positions 173, 175, 326, and 353 each coordinate 3-phosphoshikimate. Gln-175 contacts phosphoenolpyruvate. The active-site Proton acceptor is the Asp-326. 2 residues coordinate phosphoenolpyruvate: Arg-357 and Arg-402.

This sequence belongs to the EPSP synthase family. Monomer.

Its subcellular location is the cytoplasm. It carries out the reaction 3-phosphoshikimate + phosphoenolpyruvate = 5-O-(1-carboxyvinyl)-3-phosphoshikimate + phosphate. It participates in metabolic intermediate biosynthesis; chorismate biosynthesis; chorismate from D-erythrose 4-phosphate and phosphoenolpyruvate: step 6/7. Its function is as follows. Catalyzes the transfer of the enolpyruvyl moiety of phosphoenolpyruvate (PEP) to the 5-hydroxyl of shikimate-3-phosphate (S3P) to produce enolpyruvyl shikimate-3-phosphate and inorganic phosphate. In Brucella canis (strain ATCC 23365 / NCTC 10854 / RM-666), this protein is 3-phosphoshikimate 1-carboxyvinyltransferase.